Consider the following 455-residue polypeptide: tRNA modification GTPase MnmE (455 aa).

Positions 24, 81, and 121 each coordinate (6S)-5-formyl-5,6,7,8-tetrahydrofolate. Positions 217–378 constitute a TrmE-type G domain; that stretch reads GMKVVIAGRP…LKEHLKDIMG (162 aa). N227 provides a ligand contact to K(+). Residues 227 to 232, 246 to 252, 271 to 274, and 336 to 339 each bind GTP; these read NAGKSS, TDIAGTT, DTAG, and NKAD. Residue S231 coordinates Mg(2+). The K(+) site is built by T246, I248, and T251. T252 lines the Mg(2+) pocket. K455 is a binding site for (6S)-5-formyl-5,6,7,8-tetrahydrofolate.

This sequence belongs to the TRAFAC class TrmE-Era-EngA-EngB-Septin-like GTPase superfamily. TrmE GTPase family. Homodimer. Heterotetramer of two MnmE and two MnmG subunits. K(+) serves as cofactor.

The protein localises to the cytoplasm. Exhibits a very high intrinsic GTPase hydrolysis rate. Involved in the addition of a carboxymethylaminomethyl (cmnm) group at the wobble position (U34) of certain tRNAs, forming tRNA-cmnm(5)s(2)U34. This is tRNA modification GTPase MnmE from Psychromonas ingrahamii (strain DSM 17664 / CCUG 51855 / 37).